The primary structure comprises 194 residues: Probable RNA 2'-phosphotransferase (194 aa).

This sequence belongs to the KptA/TPT1 family.

Removes the 2'-phosphate from RNA via an intermediate in which the phosphate is ADP-ribosylated by NAD followed by a presumed transesterification to release the RNA and generate ADP-ribose 1''-2''-cyclic phosphate (APPR&gt;P). May function as an ADP-ribosylase. This chain is Probable RNA 2'-phosphotransferase, found in Burkholderia lata (strain ATCC 17760 / DSM 23089 / LMG 22485 / NCIMB 9086 / R18194 / 383).